An 81-amino-acid polypeptide reads, in one-letter code: Small ribosomal subunit protein bS18 (81 aa).

It belongs to the bacterial ribosomal protein bS18 family. In terms of assembly, part of the 30S ribosomal subunit. Forms a tight heterodimer with protein bS6.

Functionally, binds as a heterodimer with protein bS6 to the central domain of the 16S rRNA, where it helps stabilize the platform of the 30S subunit. This chain is Small ribosomal subunit protein bS18, found in Chlamydia trachomatis serovar L2 (strain ATCC VR-902B / DSM 19102 / 434/Bu).